Consider the following 299-residue polypeptide: Biotin transporter (299 aa).

Helical transmembrane passes span 2-22 (ALLI…GEYL), 26-46 (VDSY…FLPF), 56-76 (TVGL…MLSF), 81-101 (YLTV…ITLI), 110-130 (LRWG…IIRY), 137-157 (FWTG…GMVG), 172-192 (AFAW…FLLG), 202-222 (LQWG…YFMW), 233-253 (TLGI…LAIW), and 256-276 (QPHW…LWVH). EamA domains are found at residues 3–128 (LLII…AGII) and 139–274 (TGLL…ASLW).

Belongs to the drug/metabolite transporter (DMT) superfamily. 10 TMS drug/metabolite exporter (DME) (TC 2.A.7.3) family.

Its subcellular location is the cell inner membrane. The catalysed reaction is biotin(in) = biotin(out). Functionally, uptake of biotin. This is Biotin transporter from Escherichia coli O157:H7.